A 340-amino-acid polypeptide reads, in one-letter code: 4-amino-5-hydroxymethyl-2-methylpyrimidine phosphate synthase THI12 (340 aa).

Residue Lys-62 is modified to N6-(pyridoxal phosphate)lysine. His-66 is a catalytic residue. 115–118 contacts pyridoxal 5'-phosphate; sequence GEFG. A CCCFC; essential for catalytic activity, may be the site of iron coordination motif is present at residues 195 to 199; it reads CCCFC.

Belongs to the NMT1/THI5 family. As to quaternary structure, homodimer. The cofactor is Fe cation.

The catalysed reaction is N(6)-(pyridoxal phosphate)-L-lysyl-[4-amino-5-hydroxymethyl-2-methylpyrimidine phosphate synthase] + L-histidyl-[4-amino-5-hydroxymethyl-2-methylpyrimidine phosphate synthase] + 2 Fe(3+) + 4 H2O = L-lysyl-[4-amino-5-hydroxymethyl-2-methylpyrimidine phosphate synthase] + (2S)-2-amino-5-hydroxy-4-oxopentanoyl-[4-amino-5-hydroxymethyl-2-methylpyrimidine phosphate synthase] + 4-amino-2-methyl-5-(phosphooxymethyl)pyrimidine + 3-oxopropanoate + 2 Fe(2+) + 2 H(+). The protein operates within cofactor biosynthesis; thiamine diphosphate biosynthesis. In terms of biological role, responsible for the formation of the pyrimidine heterocycle in the thiamine biosynthesis pathway. Catalyzes the formation of hydroxymethylpyrimidine phosphate (HMP-P) from histidine and pyridoxal phosphate (PLP). The protein uses PLP and the active site histidine to form HMP-P, generating an inactive enzyme. The enzyme can only undergo a single turnover, which suggests it is a suicide enzyme. This chain is 4-amino-5-hydroxymethyl-2-methylpyrimidine phosphate synthase THI12, found in Saccharomyces cerevisiae (strain ATCC 204508 / S288c) (Baker's yeast).